The sequence spans 270 residues: Putative pyruvate, phosphate dikinase regulatory protein (270 aa).

149–156 (GVSRTSKT) serves as a coordination point for ADP.

Belongs to the pyruvate, phosphate/water dikinase regulatory protein family. PDRP subfamily.

It catalyses the reaction N(tele)-phospho-L-histidyl/L-threonyl-[pyruvate, phosphate dikinase] + ADP = N(tele)-phospho-L-histidyl/O-phospho-L-threonyl-[pyruvate, phosphate dikinase] + AMP + H(+). The enzyme catalyses N(tele)-phospho-L-histidyl/O-phospho-L-threonyl-[pyruvate, phosphate dikinase] + phosphate + H(+) = N(tele)-phospho-L-histidyl/L-threonyl-[pyruvate, phosphate dikinase] + diphosphate. Functionally, bifunctional serine/threonine kinase and phosphorylase involved in the regulation of the pyruvate, phosphate dikinase (PPDK) by catalyzing its phosphorylation/dephosphorylation. This Thermoanaerobacter pseudethanolicus (strain ATCC 33223 / 39E) (Clostridium thermohydrosulfuricum) protein is Putative pyruvate, phosphate dikinase regulatory protein.